The sequence spans 112 residues: Chaperone NapD (112 aa).

This sequence belongs to the NapD family. Interacts with the cytoplasmic NapA precursor.

It is found in the cytoplasm. Functionally, chaperone for NapA, the catalytic subunit of the periplasmic nitrate reductase. It binds directly and specifically to the twin-arginine signal peptide of NapA, preventing premature interaction with the Tat translocase and premature export. This chain is Chaperone NapD, found in Paracoccus pantotrophus (Thiosphaera pantotropha).